A 423-amino-acid chain; its full sequence is UDP-N-acetylglucosamine 1-carboxyvinyltransferase (423 aa).

22–23 (KN) is a phosphoenolpyruvate binding site. Position 98 (Arg98) interacts with UDP-N-acetyl-alpha-D-glucosamine. The Proton donor role is filled by Cys122. Cys122 bears the 2-(S-cysteinyl)pyruvic acid O-phosphothioketal mark. UDP-N-acetyl-alpha-D-glucosamine contacts are provided by residues 127 to 131 (RPVDQ), Asp311, and Ile333.

It belongs to the EPSP synthase family. MurA subfamily.

It is found in the cytoplasm. The enzyme catalyses phosphoenolpyruvate + UDP-N-acetyl-alpha-D-glucosamine = UDP-N-acetyl-3-O-(1-carboxyvinyl)-alpha-D-glucosamine + phosphate. It functions in the pathway cell wall biogenesis; peptidoglycan biosynthesis. Cell wall formation. Adds enolpyruvyl to UDP-N-acetylglucosamine. This Stenotrophomonas maltophilia (strain K279a) protein is UDP-N-acetylglucosamine 1-carboxyvinyltransferase.